We begin with the raw amino-acid sequence, 121 residues long: ATP synthase epsilon chain (121 aa).

The protein belongs to the ATPase epsilon chain family. As to quaternary structure, F-type ATPases have 2 components, CF(1) - the catalytic core - and CF(0) - the membrane proton channel. CF(1) has five subunits: alpha(3), beta(3), gamma(1), delta(1), epsilon(1). CF(0) has three main subunits: a, b and c.

It is found in the cell membrane. Produces ATP from ADP in the presence of a proton gradient across the membrane. This is ATP synthase epsilon chain from Mycobacterium sp. (strain JLS).